A 448-amino-acid polypeptide reads, in one-letter code: Solute carrier family 52, riboflavin transporter, member 3-A (448 aa).

Helical transmembrane passes span 11–31 (AFGLGSWVSINGLWVELPLIV), 40–60 (LPSYLTVIIQFANLGPLLVTL), and 73–93 (LAIYAVLSIGVVACILLAVFW). N-linked (GlcNAc...) asparagine glycosylation is present at asparagine 94. 2 helical membrane-spanning segments follow: residues 107 to 127 (AFFILTFFLALVDCTSSVTFL) and 138 to 158 (ITTYFIGEGLSGLVPGLVALA). 4 N-linked (GlcNAc...) asparagine glycosylation sites follow: asparagine 168, asparagine 171, asparagine 175, and asparagine 194. 6 consecutive transmembrane segments (helical) span residues 198-218 (EIFFSFLAVMTTISLGAFLIL), 280-300 (AFIYVMVLWVNSATNGLLPSV), 315-335 (LSAALSAVANPVACIIAMFFP), 339-359 (LVFLGILCLLGSTFGGYNMAM), 376-396 (AIIVLSWVFFTGLLSYVKVMV), and 407-427 (ALVWCGAAVQTGSLLGSIIMF).

Belongs to the riboflavin transporter family.

Its subcellular location is the cell membrane. It carries out the reaction riboflavin(in) = riboflavin(out). Its function is as follows. Plasma membrane transporter mediating the uptake by cells of the water soluble vitamin B2/riboflavin that plays a key role in biochemical oxidation-reduction reactions of the carbohydrate, lipid, and amino acid metabolism. In Danio rerio (Zebrafish), this protein is Solute carrier family 52, riboflavin transporter, member 3-A (slc52a3a).